Reading from the N-terminus, the 464-residue chain is Ribosomal protein uS12 methylthiotransferase RimO (464 aa).

Residues 14-125 enclose the MTTase N-terminal domain; that stretch reads PTVAFAHLGC…IVEVLQRVEA (112 aa). Residues Cys-23, Cys-59, Cys-88, Cys-163, Cys-167, and Cys-170 each contribute to the [4Fe-4S] cluster site. Positions 149–378 constitute a Radical SAM core domain; sequence TTDQAVAFLK…MALQQPISAE (230 aa). The TRAM domain occupies 381 to 452; the sequence is HSWVSRTVDV…VYDLSGRIVG (72 aa).

The protein belongs to the methylthiotransferase family. RimO subfamily. It depends on [4Fe-4S] cluster as a cofactor.

The protein localises to the cytoplasm. It catalyses the reaction L-aspartate(89)-[ribosomal protein uS12]-hydrogen + (sulfur carrier)-SH + AH2 + 2 S-adenosyl-L-methionine = 3-methylsulfanyl-L-aspartate(89)-[ribosomal protein uS12]-hydrogen + (sulfur carrier)-H + 5'-deoxyadenosine + L-methionine + A + S-adenosyl-L-homocysteine + 2 H(+). Catalyzes the methylthiolation of an aspartic acid residue of ribosomal protein uS12. This Parasynechococcus marenigrum (strain WH8102) protein is Ribosomal protein uS12 methylthiotransferase RimO.